Here is a 279-residue protein sequence, read N- to C-terminus: Shikimate dehydrogenase (NADP(+)) (279 aa).

Shikimate is bound by residues 20-22 (SRS) and T67. Residue K71 is the Proton acceptor of the active site. NADP(+) is bound at residue D83. Residues N92 and D108 each contribute to the shikimate site. NADP(+) is bound by residues 134 to 138 (GAGGA) and L223. Y225 lines the shikimate pocket. G246 contacts NADP(+).

It belongs to the shikimate dehydrogenase family. In terms of assembly, homodimer.

The enzyme catalyses shikimate + NADP(+) = 3-dehydroshikimate + NADPH + H(+). Its pathway is metabolic intermediate biosynthesis; chorismate biosynthesis; chorismate from D-erythrose 4-phosphate and phosphoenolpyruvate: step 4/7. Involved in the biosynthesis of the chorismate, which leads to the biosynthesis of aromatic amino acids. Catalyzes the reversible NADPH linked reduction of 3-dehydroshikimate (DHSA) to yield shikimate (SA). This chain is Shikimate dehydrogenase (NADP(+)), found in Cereibacter sphaeroides (strain ATCC 17025 / ATH 2.4.3) (Rhodobacter sphaeroides).